A 165-amino-acid polypeptide reads, in one-letter code: Zinc finger C2H2 protein ECU11_0990 (165 aa).

2 stretches are compositionally biased toward basic and acidic residues: residues 1 to 10 (MEAESPKERV) and 19 to 32 (DPER…DTSS). Positions 1-38 (MEAESPKERVQGVSGESWDPERGVKEREDTSSKKGKGV) are disordered. 2 consecutive C2H2-type zinc fingers follow at residues 103-125 (FGCE…KAQH) and 136-158 (LFCP…SRYH).

The sequence is that of Zinc finger C2H2 protein ECU11_0990 from Encephalitozoon cuniculi (strain GB-M1) (Microsporidian parasite).